Consider the following 404-residue polypeptide: Glucose-1-phosphate adenylyltransferase 2 (404 aa).

Alpha-D-glucose 1-phosphate is bound by residues Tyr-97, Gly-162, 177–178 (EK), and Ser-195.

Belongs to the bacterial/plant glucose-1-phosphate adenylyltransferase family. In terms of assembly, homotetramer.

The enzyme catalyses alpha-D-glucose 1-phosphate + ATP + H(+) = ADP-alpha-D-glucose + diphosphate. Its pathway is glycan biosynthesis; glycogen biosynthesis. Involved in the biosynthesis of ADP-glucose, a building block required for the elongation reactions to produce glycogen. Catalyzes the reaction between ATP and alpha-D-glucose 1-phosphate (G1P) to produce pyrophosphate and ADP-Glc. The sequence is that of Glucose-1-phosphate adenylyltransferase 2 from Vibrio vulnificus (strain YJ016).